A 207-amino-acid chain; its full sequence is Large ribosomal subunit protein eL13 (207 aa).

The protein belongs to the eukaryotic ribosomal protein eL13 family. As to quaternary structure, component of the 60S large ribosomal subunit (LSU).

Its subcellular location is the cytoplasm. Functionally, component of the ribosome, a large ribonucleoprotein complex responsible for the synthesis of proteins in the cell. The small ribosomal subunit (SSU) binds messenger RNAs (mRNAs) and translates the encoded message by selecting cognate aminoacyl-transfer RNA (tRNA) molecules. The large subunit (LSU) contains the ribosomal catalytic site termed the peptidyl transferase center (PTC), which catalyzes the formation of peptide bonds, thereby polymerizing the amino acids delivered by tRNAs into a polypeptide chain. The nascent polypeptides leave the ribosome through a tunnel in the LSU and interact with protein factors that function in enzymatic processing, targeting, and the membrane insertion of nascent chains at the exit of the ribosomal tunnel. As part of the LSU, it is probably required for its formation and the maturation of rRNAs. The chain is Large ribosomal subunit protein eL13 (rpl-13) from Caenorhabditis elegans.